Consider the following 147-residue polypeptide: MSGSKSPKGEFAGRKIVLKRKESRWHHYKYVNKALKLKEKSDPLGGAPMGRGIVVEKVGLEAKQPNSAIRKCVKVQLIKNGRVVTAFAPGNHAINFIDEHDEVVIEGIGGPSGQAKGDIPGVRFRVVMVGKNSMRELVRGRQEKVRR.

It belongs to the universal ribosomal protein uS12 family. In terms of assembly, part of the 30S ribosomal subunit.

With S4 and S5 plays an important role in translational accuracy. Located at the interface of the 30S and 50S subunits. The protein is Small ribosomal subunit protein uS12 of Methanococcus aeolicus (strain ATCC BAA-1280 / DSM 17508 / OCM 812 / Nankai-3).